We begin with the raw amino-acid sequence, 170 residues long: Photosystem II extrinsic protein V (170 aa).

Residues 1–33 form the signal peptide; that stretch reads MASFFSTLRRSLNRLLIALPVLLGLMISTPAQA. Cys-70, Cys-73, His-74, and His-125 together coordinate heme c.

Belongs to the cytochrome c family. PsbV subfamily. In terms of assembly, PSII is composed of 1 copy each of membrane proteins PsbA, PsbB, PsbC, PsbD, PsbE, PsbF, PsbH, PsbI, PsbJ, PsbK, PsbL, PsbM, PsbT, PsbX, PsbY, PsbZ, Psb30/Ycf12, peripheral proteins PsbO, CyanoQ (PsbQ), PsbU, PsbV and a large number of cofactors. It forms dimeric complexes. It depends on heme c as a cofactor.

It localises to the cellular thylakoid membrane. Functionally, one of the extrinsic, lumenal subunits of photosystem II (PSII). PSII is a light-driven water plastoquinone oxidoreductase, using light energy to abstract electrons from H(2)O, generating a proton gradient subsequently used for ATP formation. The extrinsic proteins stabilize the structure of photosystem II oxygen-evolving complex (OEC), the ion environment of oxygen evolution and protect the OEC against heat-induced inactivation. Low-potential cytochrome c that plays a role in the OEC of PSII. In Synechococcus sp. (strain CC9311), this protein is Photosystem II extrinsic protein V.